A 156-amino-acid polypeptide reads, in one-letter code: 3-dehydroquinate dehydratase (156 aa).

Y31 serves as the catalytic Proton acceptor. Substrate is bound by residues N83, H89, and D96. The Proton donor role is filled by H109. Residues 110-111 (LS) and R120 each bind substrate.

Belongs to the type-II 3-dehydroquinase family. In terms of assembly, homododecamer.

It catalyses the reaction 3-dehydroquinate = 3-dehydroshikimate + H2O. It participates in metabolic intermediate biosynthesis; chorismate biosynthesis; chorismate from D-erythrose 4-phosphate and phosphoenolpyruvate: step 3/7. Functionally, catalyzes a trans-dehydration via an enolate intermediate. This is 3-dehydroquinate dehydratase from Chromobacterium violaceum (strain ATCC 12472 / DSM 30191 / JCM 1249 / CCUG 213 / NBRC 12614 / NCIMB 9131 / NCTC 9757 / MK).